Consider the following 686-residue polypeptide: WD repeat-containing protein 93 (686 aa).

Residues methionine 1 to glutamine 10 show a composition bias toward polar residues. The segment at methionine 1–aspartate 40 is disordered. Residues threonine 29–aspartate 40 show a composition bias toward basic and acidic residues. Residues proline 410–valine 449 form a WD repeat.

The protein is WD repeat-containing protein 93 (WDR93) of Homo sapiens (Human).